A 200-amino-acid chain; its full sequence is uncharacterized protein (200 aa).

The segment at 1-21 (MSNSAQRDARNSRDESARASD) is disordered. The span at 7-21 (RDARNSRDESARASD) shows a compositional bias: basic and acidic residues.

This is an uncharacterized protein from Mycobacterium tuberculosis (strain ATCC 25618 / H37Rv).